The following is a 310-amino-acid chain: Aminoacyl tRNA synthase complex-interacting multifunctional protein 1 (310 aa).

Ala-2 bears the N-acetylalanine mark. The interval 6–46 is required for fibroblast proliferation; that stretch reads AVLKRLEQKGAEADQIIEYLKQQVALLKEKAILQATMREEK. Positions 54 to 192 are interaction with HSP90B1; that stretch reads KLKKEIEELK…APRTVVSGLV (139 aa). Residues 92-110 show a composition bias toward polar residues; sequence ASESVVQSPSVATTASPAT. Residues 92–147 form a disordered region; that stretch reads ASESVVQSPSVATTASPATKEQIKAGEEKKVKEKTEKKGEKKEKQQSAAASTDSKP. The segment at 101–115 is required for endothelial cell death; it reads SVATTASPATKEQIK. A compositionally biased stretch (basic and acidic residues) spans 112–136; it reads EQIKAGEEKKVKEKTEKKGEKKEKQ. The tract at residues 115–190 is required for endothelial cell migration; the sequence is KAGEEKKVKE…EAAPRTVVSG (76 aa). Phosphoserine is present on Ser-138. The 102-residue stretch at 149 to 250 folds into the tRNA-binding domain; sequence DASRLDLRIG…NGSVPGDRIT (102 aa). Lys-267 is subject to N6-succinyllysine.

Homodimer. Part of the multisynthetase complex (MSC), a multisubunit complex that groups tRNA ligases for Arg (RARS1), Asp (DARS1), Gln (QARS1), Ile (IARS1), Leu (LARS1), Lys (KARS1), Met (MARS1) the bifunctional ligase for Glu and Pro (EPRS1) and the auxiliary subunits AIMP1/p43, AIMP2/p38 and EEF1E1/p18. Interacts (via N-terminus) with RARS1 (via N-terminus). Part of a complex composed of RARS1, QARS1 and AIMP1. Interacts (via C-terminus) with SMURF2. Interacts (via N-terminus) with HSP90B1/gp96 (via C-terminus). Interacts with PSMA7. Interacts with TARS3. In terms of processing, cleaved by caspase-7 in response to apoptosis to produce EMAP-II. In terms of tissue distribution, highly expressed in salivary glands and pancreatic alpha cells in the adult (at protein level). In the embryo, expressed primarily at sites of tissue remodeling such as ganglia, developing bones and teeth.

The protein resides in the nucleus. It is found in the cytoplasm. It localises to the cytosol. The protein localises to the secreted. Its subcellular location is the endoplasmic reticulum. The protein resides in the golgi apparatus. Its function is as follows. Non-catalytic component of the multisynthase complex. Stimulates the catalytic activity of cytoplasmic arginyl-tRNA synthase. Binds tRNA. Possesses inflammatory cytokine activity. Negatively regulates TGF-beta signaling through stabilization of SMURF2 by binding to SMURF2 and inhibiting its SMAD7-mediated degradation. Involved in glucose homeostasis through induction of glucagon secretion at low glucose levels. Promotes dermal fibroblast proliferation and wound repair. Regulates KDELR1-mediated retention of HSP90B1/gp96 in the endoplasmic reticulum. Plays a role in angiogenesis by inducing endothelial cell migration at low concentrations and endothelian cell apoptosis at high concentrations. Induces maturation of dendritic cells and monocyte cell adhesion. Modulates endothelial cell responses by degrading HIF-1A through interaction with PSMA7. This Mus musculus (Mouse) protein is Aminoacyl tRNA synthase complex-interacting multifunctional protein 1 (Aimp1).